Consider the following 299-residue polypeptide: Pyridoxal 5'-phosphate synthase subunit PdxS (299 aa).

D-ribose 5-phosphate is bound at residue Asp-24. The Schiff-base intermediate with D-ribose 5-phosphate role is filled by Lys-81. Gly-153 contacts D-ribose 5-phosphate. D-glyceraldehyde 3-phosphate is bound at residue Arg-165. Residues Gly-219 and 240–241 each bind D-ribose 5-phosphate; that span reads GS.

It belongs to the PdxS/SNZ family. As to quaternary structure, in the presence of PdxT, forms a dodecamer of heterodimers.

The catalysed reaction is aldehydo-D-ribose 5-phosphate + D-glyceraldehyde 3-phosphate + L-glutamine = pyridoxal 5'-phosphate + L-glutamate + phosphate + 3 H2O + H(+). The protein operates within cofactor biosynthesis; pyridoxal 5'-phosphate biosynthesis. Its function is as follows. Catalyzes the formation of pyridoxal 5'-phosphate from ribose 5-phosphate (RBP), glyceraldehyde 3-phosphate (G3P) and ammonia. The ammonia is provided by the PdxT subunit. Can also use ribulose 5-phosphate and dihydroxyacetone phosphate as substrates, resulting from enzyme-catalyzed isomerization of RBP and G3P, respectively. In Methanococcus maripaludis (strain C7 / ATCC BAA-1331), this protein is Pyridoxal 5'-phosphate synthase subunit PdxS.